We begin with the raw amino-acid sequence, 128 residues long: uncharacterized protein (128 aa).

Transmembrane regions (helical) follow at residues 5–25 (ILALLIWSSSLIVGKLTYSMM), 27–47 (PVLVVQVRLIIAMIIVMPLFL), 60–80 (QLWWLAFFNYTAVFLLQFIGL), and 87–107 (SAVTMIGLEPLLVVFVGHFFF). One can recognise an EamA domain in the interval 9–110 (LIWSSSLIVG…FVGHFFFKTK (102 aa)).

It localises to the cell membrane. This is an uncharacterized protein from Haemophilus influenzae (strain ATCC 51907 / DSM 11121 / KW20 / Rd).